The primary structure comprises 150 residues: D-aminoacyl-tRNA deacylase (150 aa).

Residues 137 to 138 carry the Gly-cisPro motif, important for rejection of L-amino acids motif; that stretch reads GP.

It belongs to the DTD family. In terms of assembly, homodimer.

The protein localises to the cytoplasm. The enzyme catalyses glycyl-tRNA(Ala) + H2O = tRNA(Ala) + glycine + H(+). The catalysed reaction is a D-aminoacyl-tRNA + H2O = a tRNA + a D-alpha-amino acid + H(+). An aminoacyl-tRNA editing enzyme that deacylates mischarged D-aminoacyl-tRNAs. Also deacylates mischarged glycyl-tRNA(Ala), protecting cells against glycine mischarging by AlaRS. Acts via tRNA-based rather than protein-based catalysis; rejects L-amino acids rather than detecting D-amino acids in the active site. By recycling D-aminoacyl-tRNA to D-amino acids and free tRNA molecules, this enzyme counteracts the toxicity associated with the formation of D-aminoacyl-tRNA entities in vivo and helps enforce protein L-homochirality. This is D-aminoacyl-tRNA deacylase from Alkalilimnicola ehrlichii (strain ATCC BAA-1101 / DSM 17681 / MLHE-1).